Here is a 222-residue protein sequence, read N- to C-terminus: Ribosome maturation factor RimM (222 aa).

Residues 1 to 22 (MTERKQGAARPLNRPLVQPQGE) are disordered. A PRC barrel domain is found at 145-222 (EDEFYWVDLI…RIVVDWGLDY (78 aa)).

It belongs to the RimM family. In terms of assembly, binds ribosomal protein uS19.

The protein resides in the cytoplasm. An accessory protein needed during the final step in the assembly of 30S ribosomal subunit, possibly for assembly of the head region. Essential for efficient processing of 16S rRNA. May be needed both before and after RbfA during the maturation of 16S rRNA. It has affinity for free ribosomal 30S subunits but not for 70S ribosomes. The protein is Ribosome maturation factor RimM of Cupriavidus necator (strain ATCC 17699 / DSM 428 / KCTC 22496 / NCIMB 10442 / H16 / Stanier 337) (Ralstonia eutropha).